The chain runs to 864 residues: Probable beta-glucosidase J (864 aa).

Asp-233 is an active-site residue. The region spanning 411–578 is the PA14 domain; that stretch reads TGEPGYTFRV…DTDAAIQQAV (168 aa). Asn-434, Asn-447, and Asn-503 each carry an N-linked (GlcNAc...) asparagine glycan.

It belongs to the glycosyl hydrolase 3 family.

The protein localises to the secreted. The enzyme catalyses Hydrolysis of terminal, non-reducing beta-D-glucosyl residues with release of beta-D-glucose.. Its pathway is glycan metabolism; cellulose degradation. In terms of biological role, beta-glucosidases are one of a number of cellulolytic enzymes involved in the degradation of cellulosic biomass. Catalyzes the last step releasing glucose from the inhibitory cellobiose. In Neosartorya fischeri (strain ATCC 1020 / DSM 3700 / CBS 544.65 / FGSC A1164 / JCM 1740 / NRRL 181 / WB 181) (Aspergillus fischerianus), this protein is Probable beta-glucosidase J (bglJ).